Here is a 490-residue protein sequence, read N- to C-terminus: Transcriptional regulator FleQ (490 aa).

Position 142 (Leu142) interacts with 3',3'-c-di-GMP. ADP is bound by residues Val147 and 177 to 182 (GTGKEV). Residues 186-189 (NLHY) and 330-341 (ELISRMEHEKRG) each bind 3',3'-c-di-GMP. Arg334 and Arg363 together coordinate ADP.

Forms homodimers. Forms homohexamers that inhibit transcription initiation. Interacts with FleN; this complex is formed in the presence as well as in the absence of c-di-GMP or ATP.

Its activity is regulated as follows. C-di-GMP interaction leads to active site obstruction, hexameric ring destabilization thus relieving DNA bending and activating gene transcription. AAA+ ATPase enhancer-binding protein that acts as a transcription regulator and plays a role in the modulation of mucin adhesion and flagellar gene expression. In addition to flagella genes, also regulates expression of biofilm-related genes. Functions as a transcriptional repressor in the absence of c-di-GMP and as an activator when c-di-GMP is present. This chain is Transcriptional regulator FleQ, found in Pseudomonas aeruginosa (strain ATCC 15692 / DSM 22644 / CIP 104116 / JCM 14847 / LMG 12228 / 1C / PRS 101 / PAO1).